Here is a 343-residue protein sequence, read N- to C-terminus: MKFLDQAKIYVKSGDGGDGVIAFRREKYIEFGGPDGGNGGRGGDIIVEAVANLNTLIDFRYTQHFRAPKGGNGAGSDRTGAAAPDVLIKVPVGTQILEDDRETLIADLDVPGKRITLCRGGDGGHGNAHFKSSTNRAPRRADKGWPGEERWVWLRLKLIADAGLVGLPNAGKSTFLSVVSAARPKIADYPFTTLHPQLGVVRLSLQEEFVLADIPGLIEGAHEGAGLGDRFLGHVERCAVLIHLIDGAAGDVVKAWRTVREEMEGYGGGLTEKPEIIVLNKCDGMTPREASARRSALAKASGQTVTVISGVTGEGVQPLLRQVMTYVAQSREERRKAMSGTSA.

Residues Met1 to Ile159 form the Obg domain. The region spanning Ala160–Ala328 is the OBG-type G domain. GTP contacts are provided by residues Gly166–Ser173, Phe191–His195, Asp213–Gly216, Asn280–Asp283, and Ser309–Val311. Residues Ser173 and Thr193 each contribute to the Mg(2+) site.

This sequence belongs to the TRAFAC class OBG-HflX-like GTPase superfamily. OBG GTPase family. As to quaternary structure, monomer. It depends on Mg(2+) as a cofactor.

The protein localises to the cytoplasm. An essential GTPase which binds GTP, GDP and possibly (p)ppGpp with moderate affinity, with high nucleotide exchange rates and a fairly low GTP hydrolysis rate. Plays a role in control of the cell cycle, stress response, ribosome biogenesis and in those bacteria that undergo differentiation, in morphogenesis control. This is GTPase Obg from Granulibacter bethesdensis (strain ATCC BAA-1260 / CGDNIH1).